The chain runs to 980 residues: LRR receptor-like serine/threonine-protein kinase SIK1 (980 aa).

An N-terminal signal peptide occupies residues 1 to 24 (MAAARAPWLWWWVVVVVGVAVAEA). The Extracellular segment spans residues 25 to 588 (ASGGGGGGDG…HGQRVNISKT (564 aa)). N-linked (GlcNAc...) asparagine glycans are attached at residues Asn-72 and Asn-81. LRR repeat units lie at residues 75–98 (FAVLALNLSNLNLGGEISPAIGEL), 99–122 (KNLQFVDLKGNKLTGQIPDEIGDC), 124–146 (SLKYLDLSGNLLYGDIPFSISKL), 147–170 (KQLEELILKNNQLTGPIPSTLSQI), 171–194 (PNLKTLDLAQNQLTGDIPRLIYWN), 196–218 (VLQYLGLRGNSLTGTLSPDMCQL), 219–242 (TGLWYFDVRGNNLTGTIPESIGNC), 243–265 (TSFEILDISYNQISGEIPYNIGF), 266–289 (LQVATLSLQGNRLTGKIPDVIGLM), 290–312 (QALAVLDLSENELVGPIPSILGN), 314–337 (SYTGKLYLHGNKLTGVIPPELGNM), 338–361 (SKLSYLQLNDNELVGTIPAELGKL), 362–385 (EELFELNLANNNLQGPIPANISSC), 387–408 (ALNKFNVYGNKLNGSIPAGFQK), 409–433 (LESLTYLNLSSNNFKGNIPSELGHI), 435–457 (NLDTLDLSYNEFSGPVPATIGDL), 458–480 (EHLLELNLSKNHLDGPVPAEFGN), 481–505 (LRSVQVIDMSNNNLSGSLPEELGQL), 507–529 (NLDSLILNNNNLVGEIPAQLANC), and 531–554 (SLNNLNLSYNNLSGHVPMAKNFSK). 2 N-linked (GlcNAc...) asparagine glycosylation sites follow: Asn-230 and Asn-241. N-linked (GlcNAc...) asparagine glycosylation is found at Asn-312 and Asn-336. 3 N-linked (GlcNAc...) asparagine glycosylation sites follow: Asn-381, Asn-399, and Asn-416. N-linked (GlcNAc...) asparagine glycosylation is found at Asn-464 and Asn-493. Residues Asn-536, Asn-541, Asn-551, and Asn-584 are each glycosylated (N-linked (GlcNAc...) asparagine). The helical transmembrane segment at 589 to 609 (AIACIILGFIILLCVLLLAIY) threads the bilayer. The Cytoplasmic portion of the chain corresponds to 610-980 (KTNQPQPLVK…FGEVISKHTM (371 aa)). In terms of domain architecture, Protein kinase spans 653-923 (LSEKYIIGYG…EVARVLLSLL (271 aa)). ATP-binding positions include 659–667 (IGYGASSTV) and Lys-681. Catalysis depends on Asp-778, which acts as the Proton acceptor.

It belongs to the protein kinase superfamily. Ser/Thr protein kinase family. Post-translationally, autophosphorylated. In terms of tissue distribution, expressed in nodes, vascular bundles of stems, and anthers.

It localises to the cell membrane. The enzyme catalyses L-seryl-[protein] + ATP = O-phospho-L-seryl-[protein] + ADP + H(+). It catalyses the reaction L-threonyl-[protein] + ATP = O-phospho-L-threonyl-[protein] + ADP + H(+). Functionally, receptor kinase involved in salt drought stress responses. Acts as a positive regulator of salt and drought tolerance. May promote salt and drought tolerance through the induction of the activities of antioxidative enzymes, such as peroxidase, superoxide dismutase and catalase. May be involved in the control of stomatal development in leaf epidermis. Possesses kinase activity in vitro. Does not seem to be involved in heat tolerance. This chain is LRR receptor-like serine/threonine-protein kinase SIK1, found in Oryza sativa subsp. japonica (Rice).